The sequence spans 485 residues: N-succinylglutamate 5-semialdehyde dehydrogenase (485 aa).

220–225 contacts NAD(+); sequence GSANTG. Active-site residues include glutamate 243 and cysteine 278.

The protein belongs to the aldehyde dehydrogenase family. AstD subfamily.

It carries out the reaction N-succinyl-L-glutamate 5-semialdehyde + NAD(+) + H2O = N-succinyl-L-glutamate + NADH + 2 H(+). The protein operates within amino-acid degradation; L-arginine degradation via AST pathway; L-glutamate and succinate from L-arginine: step 4/5. Functionally, catalyzes the NAD-dependent reduction of succinylglutamate semialdehyde into succinylglutamate. In Vibrio cholerae serotype O1 (strain M66-2), this protein is N-succinylglutamate 5-semialdehyde dehydrogenase.